The primary structure comprises 217 residues: Sentrin-specific protease 8 (217 aa).

At Met1 the chain carries N-acetylmethionine. The segment at 11 to 174 (SLLRQSDVSL…MYVICNTEAL (164 aa)) is protease. Residues His102 and Asp119 contribute to the active site. Catalysis depends on Cys163, which acts as the Nucleophile.

The protein belongs to the peptidase C48 family.

Protease that catalyzes two essential functions in the NEDD8 pathway: processing of full-length NEDD8 to its mature form and deconjugation of NEDD8 from targeted proteins such as cullins or p53. In Rattus norvegicus (Rat), this protein is Sentrin-specific protease 8 (Senp8).